The primary structure comprises 478 residues: uncharacterized protein (478 aa).

One can recognise an ATP-grasp domain in the interval 174-366 (RQVLAAAGVP…LIGEHIKLAI (193 aa)). 214–219 (GSGSRG) contributes to the ATP binding site. Arginine 339 is a catalytic residue.

This is an uncharacterized protein from Sinorhizobium fredii (strain NBRC 101917 / NGR234).